A 67-amino-acid polypeptide reads, in one-letter code: Brevinin-1CDYa (67 aa).

Positions 1–22 are cleaved as a signal peptide; the sequence is MFTLKKSLLLIFFLGTINLSLC. Residues 23–45 constitute a propeptide that is removed on maturation; that stretch reads EEERNADEEERRDDLEERDVEVE. A disulfide bridge links C61 with C67.

Belongs to the frog skin active peptide (FSAP) family. Brevinin subfamily. Expressed by the skin glands.

Its subcellular location is the secreted. Antimicrobial peptide. Has low activity against the Gram-positive bacterium S.aureus (MIC=12.5 uM) and the Gram-negative bacterium E.coli (MIC=25 uM). Has weak hemolytic activity against human erythrocytes. In Rana dybowskii (Dybovsky's frog), this protein is Brevinin-1CDYa.